The chain runs to 274 residues: Transcription factor MYB32 (274 aa).

HTH myb-type domains lie at 9 to 61 (KDHT…INYL) and 62 to 116 (RPDL…KRKL). 2 consecutive DNA-binding regions (H-T-H motif) follow at residues 37-61 (WRSL…INYL) and 89-112 (WSLI…NTHV). A disordered region spans residues 123-144 (PATHRPINETKTSQDSSDSSKT).

In terms of tissue distribution, mostly expressed in roots, and, to a lower extent, in stems, flower buds, and siliques.

The protein localises to the nucleus. This chain is Transcription factor MYB32 (MYB32), found in Arabidopsis thaliana (Mouse-ear cress).